We begin with the raw amino-acid sequence, 102 residues long: Parathymosin (102 aa).

Positions 1 to 102 are disordered; the sequence is MSEKSVEAAA…RQKTENGASA (102 aa). An N-acetylserine modification is found at S2. A Phosphoserine modification is found at S2. Residue K4 is modified to N6-acetyllysine. 2 positions are modified to phosphoserine: S5 and S13. Residues 13-37 are compositionally biased toward basic and acidic residues; that stretch reads SAKDLKEKKDKVEEKAGRKERKKEV. K15 is subject to N6-acetyllysine. Over residues 38–75 the composition is skewed to acidic residues; sequence VEEEENGAEEEEEETAEDGEDDDEGDEEDEEEEEEEDE. Phosphothreonine is present on T52. K92 bears the N6-acetyllysine mark.

It belongs to the pro/parathymosin family.

In terms of biological role, parathymosin may mediate immune function by blocking the effect of prothymosin alpha which confers resistance to certain opportunistic infections. This chain is Parathymosin (Ptms), found in Rattus norvegicus (Rat).